Consider the following 820-residue polypeptide: TORTIFOLIA1-like protein 2 (820 aa).

HEAT repeat units follow at residues 61-98 (DKVSCFLSCILDTDSEQKSAVRKECIRLMGTLARFHEG), 102-139 (PYLGKMVSSIVKRLKDPDSVVRDACIETMGVLASKMSC), 146-183 (GVFVSLVKPLFEAIGDQNKYVQSGAALCLARVIDSSPE), 187-224 (AIIQRMLMRTVKLLNNSHFIAKPAVIELNRSIILAGGA), and 228-265 (SVLSSAMSSFQDALKNKDWTTRKAASVALMEIAATGEK). The span at 304–321 (PGSDSPEPSETESSVKES) shows a compositional bias: low complexity. Disordered stretches follow at residues 304–325 (PGSDSPEPSETESSVKESYNGA), 357–377 (PVSARQPPTRYNDDPRKSNQD), and 584–644 (GSTI…GKTG). Basic and acidic residues predominate over residues 367–377 (YNDDPRKSNQD). The segment covering 584-613 (GSTISPRLSSCTSRTSTDIRNRQSTLSTSK) has biased composition (polar residues).

This chain is TORTIFOLIA1-like protein 2, found in Arabidopsis thaliana (Mouse-ear cress).